The following is a 466-amino-acid chain: Bifunctional protein GlmU (466 aa).

Residues 1–233 (MLHKSVLGLV…ADEAMGANDR (233 aa)) form a pyrophosphorylase region. UDP-N-acetyl-alpha-D-glucosamine contacts are provided by residues 11 to 14 (LAAG), Lys-25, Gln-79, and 84 to 85 (GT). Asp-108 is a Mg(2+) binding site. Gly-143, Glu-158, Asn-173, and Asn-231 together coordinate UDP-N-acetyl-alpha-D-glucosamine. Residue Asn-231 participates in Mg(2+) binding. The tract at residues 234–254 (AQLAALEAVYRQRKVQELFAQ) is linker. Positions 255-466 (GVTLIDPNRI…QKKKEHKNDA (212 aa)) are N-acetyltransferase. UDP-N-acetyl-alpha-D-glucosamine is bound by residues Arg-337 and Lys-355. His-367 serves as the catalytic Proton acceptor. Residues Tyr-370 and Asn-381 each contribute to the UDP-N-acetyl-alpha-D-glucosamine site. Residues Ala-384, 390-391 (NY), Ser-409, Ala-427, and Arg-444 contribute to the acetyl-CoA site.

The protein in the N-terminal section; belongs to the N-acetylglucosamine-1-phosphate uridyltransferase family. In the C-terminal section; belongs to the transferase hexapeptide repeat family. Homotrimer. It depends on Mg(2+) as a cofactor.

The protein resides in the cytoplasm. It carries out the reaction alpha-D-glucosamine 1-phosphate + acetyl-CoA = N-acetyl-alpha-D-glucosamine 1-phosphate + CoA + H(+). It catalyses the reaction N-acetyl-alpha-D-glucosamine 1-phosphate + UTP + H(+) = UDP-N-acetyl-alpha-D-glucosamine + diphosphate. It functions in the pathway nucleotide-sugar biosynthesis; UDP-N-acetyl-alpha-D-glucosamine biosynthesis; N-acetyl-alpha-D-glucosamine 1-phosphate from alpha-D-glucosamine 6-phosphate (route II): step 2/2. The protein operates within nucleotide-sugar biosynthesis; UDP-N-acetyl-alpha-D-glucosamine biosynthesis; UDP-N-acetyl-alpha-D-glucosamine from N-acetyl-alpha-D-glucosamine 1-phosphate: step 1/1. It participates in bacterial outer membrane biogenesis; LPS lipid A biosynthesis. Its function is as follows. Catalyzes the last two sequential reactions in the de novo biosynthetic pathway for UDP-N-acetylglucosamine (UDP-GlcNAc). The C-terminal domain catalyzes the transfer of acetyl group from acetyl coenzyme A to glucosamine-1-phosphate (GlcN-1-P) to produce N-acetylglucosamine-1-phosphate (GlcNAc-1-P), which is converted into UDP-GlcNAc by the transfer of uridine 5-monophosphate (from uridine 5-triphosphate), a reaction catalyzed by the N-terminal domain. This chain is Bifunctional protein GlmU, found in Dichelobacter nodosus (strain VCS1703A).